The chain runs to 103 residues: Integration host factor subunit beta (103 aa).

Belongs to the bacterial histone-like protein family. In terms of assembly, heterodimer of an alpha and a beta chain.

This protein is one of the two subunits of integration host factor, a specific DNA-binding protein that functions in genetic recombination as well as in transcriptional and translational control. The polypeptide is Integration host factor subunit beta (Bradyrhizobium sp. (strain BTAi1 / ATCC BAA-1182)).